The sequence spans 264 residues: Movement protein (264 aa).

Positions 210-219 (FRTKPSKRGP) are enriched in basic residues. Positions 210–264 (FRTKPSKRGPKNNNNLGKGRSGGRPKPKSFDEVEKEFDNLIEDEAETSVADSDSY) are disordered. Over residues 237–247 (KSFDEVEKEFD) the composition is skewed to basic and acidic residues.

Belongs to the tobamovirus movement protein family. As to quaternary structure, binds to host RBCS at the plasmodesmata; this interaction seems required for viral systemic movement. In resistant plants, interacts with host MBP2C at host microtubules; this interaction prevents virus cell to cell movement. In resistant plants, interacts with host resistance (R) protein (e.g. tomato ToMV resistance protein TM-2(2), AC Q71BG9) at the host plasma membrane; this interaction triggers host defense responses leading to programmed cell death.

Its subcellular location is the host cytoplasm. It is found in the host cytoskeleton. It localises to the host cell junction. The protein localises to the host plasmodesma. Its function is as follows. Transports viral genome to neighboring plant cells directly through plasmosdesmata, without any budding. The movement protein allows efficient cell to cell propagation, by bypassing the host cell wall barrier. Forms a ribonucleoprotein complex with viral RNA. Binds microtubules and modulates microtubule stability. Can bind double-stranded DNA. Triggers host hypersensitive defense reaction in incompatible plants harboring resistance (R) proteins. The polypeptide is Movement protein (MP) (Tomato mosaic virus (strain LII) (ToMV)).